The primary structure comprises 259 residues: Flagellar L-ring protein (259 aa).

Residues 1–15 (MKRISLIALVTIMSG) form the signal peptide. C16 carries N-palmitoyl cysteine lipidation. A lipid anchor (S-diacylglycerol cysteine) is attached at C16.

The protein belongs to the FlgH family. The basal body constitutes a major portion of the flagellar organelle and consists of four rings (L,P,S, and M) mounted on a central rod.

The protein resides in the cell outer membrane. Its subcellular location is the bacterial flagellum basal body. Functionally, assembles around the rod to form the L-ring and probably protects the motor/basal body from shearing forces during rotation. This chain is Flagellar L-ring protein, found in Vibrio vulnificus (strain CMCP6).